The sequence spans 408 residues: tRNA-specific 2-thiouridylase MnmA (408 aa).

ATP contacts are provided by residues 20 to 27 (AMSGGVDS) and Leu-46. Catalysis depends on Cys-114, which acts as the Nucleophile. Residues Cys-114 and Cys-210 are joined by a disulfide bond. Gly-138 lines the ATP pocket. The segment at 160-162 (RDQ) is interaction with tRNA. The Cysteine persulfide intermediate role is filled by Cys-210.

It belongs to the MnmA/TRMU family.

It is found in the cytoplasm. It catalyses the reaction S-sulfanyl-L-cysteinyl-[protein] + uridine(34) in tRNA + AH2 + ATP = 2-thiouridine(34) in tRNA + L-cysteinyl-[protein] + A + AMP + diphosphate + H(+). Functionally, catalyzes the 2-thiolation of uridine at the wobble position (U34) of tRNA, leading to the formation of s(2)U34. This Bartonella quintana (strain Toulouse) (Rochalimaea quintana) protein is tRNA-specific 2-thiouridylase MnmA.